We begin with the raw amino-acid sequence, 149 residues long: Large ribosomal subunit protein bL20m (149 aa).

The N-terminal 9 residues, 1-9 (MVFLTAQLW), are a transit peptide targeting the mitochondrion.

It belongs to the bacterial ribosomal protein bL20 family. As to quaternary structure, component of the mitochondrial large ribosomal subunit (mt-LSU). Mature mammalian 55S mitochondrial ribosomes consist of a small (28S) and a large (39S) subunit. The 28S small subunit contains a 12S ribosomal RNA (12S mt-rRNA) and 30 different proteins. The 39S large subunit contains a 16S rRNA (16S mt-rRNA), a copy of mitochondrial valine transfer RNA (mt-tRNA(Val)), which plays an integral structural role, and 52 different proteins. Interacts with OXA1L.

It is found in the mitochondrion. The polypeptide is Large ribosomal subunit protein bL20m (MRPL20) (Homo sapiens (Human)).